Consider the following 1028-residue polypeptide: Contactin-6 (1028 aa).

The N-terminal stretch at 1–19 (MRLLWKLVILLPLINSCAG) is a signal peptide. 6 Ig-like C2-type domains span residues 32–117 (PQDV…AKLQ), 122–208 (EDFE…RSVQ), 227–308 (PKIE…RNLA), 318–402 (PEWE…AELR), 408–495 (PDFS…GSLI), and 499–587 (RTVI…ERLS). 6 disulfides stabilise this stretch: C50–C100, C144–C196, C249–C297, C339–C386, C431–C479, and C521–C577. N65 and N193 each carry an N-linked (GlcNAc...) asparagine glycan. N-linked (GlcNAc...) asparagine glycans are attached at residues N368, N377, and N468. 4 consecutive Fibronectin type-III domains span residues 600–698 (PPED…TKAS), 703–800 (APVN…SGED), 805–901 (APRG…TKKS), and 902–996 (PPSQ…KMSS). N659, N765, N860, and N865 each carry an N-linked (GlcNAc...) asparagine glycan. The residue at position 882 (Y882) is a Phosphotyrosine. Residues 887-902 (TGPSSPPVNVTTKKSP) are compositionally biased toward polar residues. The interval 887–908 (TGPSSPPVNVTTKKSPPSQPPA) is disordered. N-linked (GlcNAc...) asparagine glycosylation is found at N895, N931, N956, and N957. The GPI-anchor amidated serine moiety is linked to residue S999. A propeptide spans 1000–1028 (VGVQILKPSTQFLTMVGFFYCFVIQPLSR) (removed in mature form).

Belongs to the immunoglobulin superfamily. Contactin family. In terms of assembly, interacts with PTPRG. Specifically expressed in neuronal cells. In brain, it is expressed in spinal cord, cerebrum and cerebellum. At 17 dpc, it is expressed in hippocampus, cerebellum, and the brain stem. Strongly expressed after birth with a maximum level between P1 and P21, which corresponds to the time frame of oligodendrogliogenesis.

Its subcellular location is the cell membrane. Functionally, contactins mediate cell surface interactions during nervous system development. Participates in oligodendrocytes generation by acting as a ligand of NOTCH1. Its association with NOTCH1 promotes NOTCH1 activation through the released notch intracellular domain (NICD) and subsequent translocation to the nucleus. May be involved in motor coordination. The protein is Contactin-6 (Cntn6) of Rattus norvegicus (Rat).